The following is a 212-amino-acid chain: Transcriptional repressor CcpN (212 aa).

The HTH deoR-type domain occupies 6-70 (LNKRQEHILQ…FYTGKTGTQL (65 aa)). Positions 23-42 (ITGEHIAEKLNLTRATLRPD) form a DNA-binding region, H-T-H motif. CBS domains lie at 83–139 (FQSI…QQEL) and 148–211 (MTRM…ENEI).

Its function is as follows. Transcription repressor that binds to the promoter of gapB and pckA genes, preventing their expression. Acts as a regulator for catabolite repression of gluconeogenic genes. The polypeptide is Transcriptional repressor CcpN (ccpN) (Bacillus subtilis (strain 168)).